Reading from the N-terminus, the 450-residue chain is Large terminase protein homolog UL15b (450 aa).

The protein belongs to the herpesviridae large terminase family.

The polypeptide is Large terminase protein homolog UL15b (UL15b) (Psittacid herpesvirus 1 (isolate Amazon parrot/-/97-0001/1997) (PsHV-1)).